Here is a 312-residue protein sequence, read N- to C-terminus: Nucleosome assembly protein 1-like 4 (312 aa).

A coiled-coil region spans residues 24 to 78; that stretch reads VETLKNKLQALAEQHVDVLESLAPSVRKRVDVLMEIQSQHDELEVKFFEEKAALE. Residues 45-60 carry the Nuclear export signal motif; that stretch reads LAPSVRKRVDVLMEIQ. Positions 289 to 312 are disordered; that stretch reads DYGASWVDDEEEDDNNDEYSDEEA.

Belongs to the nucleosome assembly protein (NAP) family.

Its subcellular location is the nucleus. The protein localises to the cytoplasm. Its function is as follows. May modulate chromatin structure by regulation of nucleosome assembly/disassembly. This chain is Nucleosome assembly protein 1-like 4, found in Oryza sativa subsp. japonica (Rice).